A 240-amino-acid polypeptide reads, in one-letter code: Bidirectional sugar transporter SWEET5 (240 aa).

At 1-9 (MTDPHTART) the chain is on the extracellular side. Residues 10 to 30 (IVGIVGNVISFGLFCAPIPTM) form a helical membrane-spanning segment. In terms of domain architecture, MtN3/slv 1 spans 10–95 (IVGIVGNVIS…YVTIFFVFAT (86 aa)). Residues 31–45 (VKIWKMKSVSEFKPD) lie on the Cytoplasmic side of the membrane. A helical transmembrane segment spans residues 46–66 (PYVATVLNCMMWTFYGLPFVQ). The Extracellular portion of the chain corresponds to 67-72 (PDSLLV). Residues 73–93 (ITINGTGLFMELVYVTIFFVF) form a helical membrane-spanning segment. Topologically, residues 94-103 (ATSPVRRKIT) are cytoplasmic. Residues 104 to 124 (IAMVIEVIFMAVVIFCTMYFL) traverse the membrane as a helical segment. At 125–131 (HTTKQRS) the chain is on the extracellular side. A helical transmembrane segment spans residues 132 to 152 (MLIGILCIVFNVIMYAAPLTV). Residues 133–217 (LIGILCIVFN…IIYITYYKTT (85 aa)) enclose the MtN3/slv 2 domain. Residues 153–165 (MKLVIKTKSVKYM) lie on the Cytoplasmic side of the membrane. The chain crosses the membrane as a helical span at residues 166-186 (PFFLSLANFMNGVVWVIYACL). The Extracellular portion of the chain corresponds to 187-190 (KFDP). A helical membrane pass occupies residues 191 to 211 (YILIPNGLGSLSGIIQLIIYI). Topologically, residues 212–240 (TYYKTTNWNDDDEDKEKRYSNAGIELGQA) are cytoplasmic.

It belongs to the SWEET sugar transporter family. Forms homooligomers and heterooligomers with SWEET6, SWEET8, SWEET9, SWEET11 and SWEET12.

The protein localises to the cell membrane. Mediates both low-affinity uptake and efflux of sugar across the plasma membrane. May play roles in nurturing the male gametophyte. In Arabidopsis thaliana (Mouse-ear cress), this protein is Bidirectional sugar transporter SWEET5.